Reading from the N-terminus, the 357-residue chain is Peptide chain release factor 1 (357 aa).

Q232 carries the N5-methylglutamine modification. Positions 282-291 (KQRAEQEAAR) are enriched in basic and acidic residues. The disordered stretch occupies residues 282-302 (KQRAEQEAARRSQVGTGDRSE).

Belongs to the prokaryotic/mitochondrial release factor family. Post-translationally, methylated by PrmC. Methylation increases the termination efficiency of RF1.

It is found in the cytoplasm. In terms of biological role, peptide chain release factor 1 directs the termination of translation in response to the peptide chain termination codons UAG and UAA. The polypeptide is Peptide chain release factor 1 (Solidesulfovibrio magneticus (strain ATCC 700980 / DSM 13731 / RS-1) (Desulfovibrio magneticus)).